The following is a 243-amino-acid chain: MSKTVIAGNWKMHMTCAQARDFISAYLPLIKNVPKGRELVLAPPFTAISTLSEILKGSNVSLSSQNVHWEDNGAFTAEISPKMLLEHSVSYAIVGHSEPRKYFSESDKQINLRAKSAQANGLIPIVCVGETIEQRERGEAERVIRRQVEQGLEETDKKKLIVAYEPIWAIGTGKTCEANEANRICGLIRQWANCPEILIQYGGSVKPGNIDEIMAMSDIDGVLVGGASLDPESFARISNYKVE.

Asn-9 to Lys-11 provides a ligand contact to substrate. The active-site Electrophile is His-96. The Proton acceptor role is filled by Glu-165. Substrate is bound by residues Gly-171, Ser-204, and Gly-225 to Gly-226.

The protein belongs to the triosephosphate isomerase family. In terms of assembly, homodimer.

Its subcellular location is the cytoplasm. It carries out the reaction D-glyceraldehyde 3-phosphate = dihydroxyacetone phosphate. Its pathway is carbohydrate biosynthesis; gluconeogenesis. The protein operates within carbohydrate degradation; glycolysis; D-glyceraldehyde 3-phosphate from glycerone phosphate: step 1/1. Functionally, involved in the gluconeogenesis. Catalyzes stereospecifically the conversion of dihydroxyacetone phosphate (DHAP) to D-glyceraldehyde-3-phosphate (G3P). The polypeptide is Triosephosphate isomerase (Prochlorococcus marinus (strain MIT 9211)).